We begin with the raw amino-acid sequence, 433 residues long: Enolase (433 aa).

Serine 1 bears the N-acetylserine mark. Serine 36 and histidine 157 together coordinate (2R)-2-phosphoglycerate. Glutamate 209 (proton donor) is an active-site residue. Positions 244, 294, and 319 each coordinate Mn(2+). The (2R)-2-phosphoglycerate site is built by lysine 344, arginine 373, and serine 374. Catalysis depends on lysine 344, which acts as the Proton acceptor.

The protein belongs to the enolase family. Homodimer. It depends on Mg(2+) as a cofactor.

Its subcellular location is the cytoplasm. It carries out the reaction (2R)-2-phosphoglycerate = phosphoenolpyruvate + H2O. Its pathway is carbohydrate degradation; glycolysis; pyruvate from D-glyceraldehyde 3-phosphate: step 4/5. With respect to regulation, inhibited by 2-phosphoglycolic acid. The sequence is that of Enolase from Homarus gammarus (European lobster).